Consider the following 635-residue polypeptide: 1-deoxy-D-xylulose-5-phosphate synthase (635 aa).

Residues histidine 72 and 113–115 (GHA) contribute to the thiamine diphosphate site. Aspartate 144 provides a ligand contact to Mg(2+). Thiamine diphosphate is bound by residues 145–146 (GA), asparagine 174, tyrosine 287, and glutamate 370. Asparagine 174 provides a ligand contact to Mg(2+).

It belongs to the transketolase family. DXPS subfamily. As to quaternary structure, homodimer. The cofactor is Mg(2+). Thiamine diphosphate serves as cofactor.

It catalyses the reaction D-glyceraldehyde 3-phosphate + pyruvate + H(+) = 1-deoxy-D-xylulose 5-phosphate + CO2. It participates in metabolic intermediate biosynthesis; 1-deoxy-D-xylulose 5-phosphate biosynthesis; 1-deoxy-D-xylulose 5-phosphate from D-glyceraldehyde 3-phosphate and pyruvate: step 1/1. Catalyzes the acyloin condensation reaction between C atoms 2 and 3 of pyruvate and glyceraldehyde 3-phosphate to yield 1-deoxy-D-xylulose-5-phosphate (DXP). This Trichormus variabilis (strain ATCC 29413 / PCC 7937) (Anabaena variabilis) protein is 1-deoxy-D-xylulose-5-phosphate synthase.